Consider the following 434-residue polypeptide: Serine hydroxymethyltransferase (434 aa).

(6S)-5,6,7,8-tetrahydrofolate is bound by residues Leu124 and 128 to 130 (GHL). Lys233 is subject to N6-(pyridoxal phosphate)lysine. Glu249 lines the (6S)-5,6,7,8-tetrahydrofolate pocket.

Belongs to the SHMT family. Homodimer. Pyridoxal 5'-phosphate serves as cofactor.

Its subcellular location is the cytoplasm. It carries out the reaction (6R)-5,10-methylene-5,6,7,8-tetrahydrofolate + glycine + H2O = (6S)-5,6,7,8-tetrahydrofolate + L-serine. Its pathway is one-carbon metabolism; tetrahydrofolate interconversion. It participates in amino-acid biosynthesis; glycine biosynthesis; glycine from L-serine: step 1/1. Catalyzes the reversible interconversion of serine and glycine with tetrahydrofolate (THF) serving as the one-carbon carrier. This reaction serves as the major source of one-carbon groups required for the biosynthesis of purines, thymidylate, methionine, and other important biomolecules. Also exhibits THF-independent aldolase activity toward beta-hydroxyamino acids, producing glycine and aldehydes, via a retro-aldol mechanism. This chain is Serine hydroxymethyltransferase, found in Synechococcus sp. (strain JA-3-3Ab) (Cyanobacteria bacterium Yellowstone A-Prime).